The chain runs to 652 residues: Acetyl-coenzyme A synthetase (652 aa).

Residues 191–194, Thr311, and Asn335 contribute to the CoA site; that span reads RAGR. Residues 387–389, 411–416, Asp500, and Arg515 each bind ATP; these read GEP and DTWWQT. Residue Ser523 participates in CoA binding. Arg526 is an ATP binding site. Positions 537, 539, and 542 each coordinate Mg(2+). Arg584 contributes to the CoA binding site. Lys609 carries the post-translational modification N6-acetyllysine.

This sequence belongs to the ATP-dependent AMP-binding enzyme family. Requires Mg(2+) as cofactor. Post-translationally, acetylated. Deacetylation by the SIR2-homolog deacetylase activates the enzyme.

It catalyses the reaction acetate + ATP + CoA = acetyl-CoA + AMP + diphosphate. In terms of biological role, catalyzes the conversion of acetate into acetyl-CoA (AcCoA), an essential intermediate at the junction of anabolic and catabolic pathways. Acs undergoes a two-step reaction. In the first half reaction, Acs combines acetate with ATP to form acetyl-adenylate (AcAMP) intermediate. In the second half reaction, it can then transfer the acetyl group from AcAMP to the sulfhydryl group of CoA, forming the product AcCoA. Enables the cell to use acetate during aerobic growth to generate energy via the TCA cycle, and biosynthetic compounds via the glyoxylate shunt. Acetylates CheY, the response regulator involved in flagellar movement and chemotaxis. This is Acetyl-coenzyme A synthetase from Sodalis glossinidius (strain morsitans).